The following is a 129-amino-acid chain: Large ribosomal subunit protein bL21 (129 aa).

The segment at 102–129 (TDNAKPTKGPRPKKEKVAKEATKEDAAA) is disordered. Residues 116–129 (EKVAKEATKEDAAA) are compositionally biased toward basic and acidic residues.

Belongs to the bacterial ribosomal protein bL21 family. In terms of assembly, part of the 50S ribosomal subunit. Contacts protein L20.

Functionally, this protein binds to 23S rRNA in the presence of protein L20. This is Large ribosomal subunit protein bL21 from Bradyrhizobium diazoefficiens (strain JCM 10833 / BCRC 13528 / IAM 13628 / NBRC 14792 / USDA 110).